The following is a 104-amino-acid chain: uncharacterized protein (104 aa).

Residues 42-104 (ARDSFDQDFE…AREERHKLGR (63 aa)) are a coiled coil.

Belongs to the WXG100 family.

This is an uncharacterized protein from Bacillus subtilis (strain 168).